Here is a 390-residue protein sequence, read N- to C-terminus: 3,5-dihydroxyphenylacetyl-CoA synthase (390 aa).

C173 is a catalytic residue.

This sequence belongs to the thiolase-like superfamily. Chalcone/stilbene synthases family.

It carries out the reaction 4 malonyl-CoA + 4 H(+) = (3,5-dihydroxyphenyl)acetyl-CoA + 4 CO2 + 3 CoA + H2O. The protein operates within antibiotic biosynthesis; vancomycin biosynthesis. Its function is as follows. Involved in the biosynthesis of the nonproteinogenic amino acid monomer (S)-3,5-dihydroxyphenylglycine (Dpg) responsible of the production of vancomycin and teicoplanin antibiotics. Catalyzes the Claisen condensation of four molecules of malonyl-CoA to yield 3,5-dihydroxyphenylacetyl-CoA (DPA-CoA) and three free coenzyme A (CoA). DpgA requires the presence of the dehydratases DpgB and DpgD to facilitate the aromatization of the DPA-S-DgpA or DPA-S-CoA intermediate. The sequence is that of 3,5-dihydroxyphenylacetyl-CoA synthase from Streptomyces toyocaensis.